The primary structure comprises 307 residues: Small ribosomal subunit biogenesis GTPase RsgA (307 aa).

Residues 1 to 20 are disordered; that stretch reads MPSEHPFSDGISTPNPKETM. Over residues 10 to 20 the composition is skewed to polar residues; it reads GISTPNPKETM. In terms of domain architecture, CP-type G spans 85–242; it reads RQDAWKTKLI…LIDSPGLQEF (158 aa). GTP is bound by residues 135-138 and 184-192; these read NKAD and GQSGMGKST. The Zn(2+) site is built by Cys266, Cys271, His273, and Cys279.

Belongs to the TRAFAC class YlqF/YawG GTPase family. RsgA subfamily. Monomer. Associates with 30S ribosomal subunit, binds 16S rRNA. The cofactor is Zn(2+).

The protein resides in the cytoplasm. Its function is as follows. One of several proteins that assist in the late maturation steps of the functional core of the 30S ribosomal subunit. Helps release RbfA from mature subunits. May play a role in the assembly of ribosomal proteins into the subunit. Circularly permuted GTPase that catalyzes slow GTP hydrolysis, GTPase activity is stimulated by the 30S ribosomal subunit. In Neisseria meningitidis serogroup A / serotype 4A (strain DSM 15465 / Z2491), this protein is Small ribosomal subunit biogenesis GTPase RsgA.